Consider the following 419-residue polypeptide: Peptide chain release factor subunit 1 (419 aa).

The protein belongs to the eukaryotic release factor 1 family. Heterodimer of two subunits, one of which binds GTP.

It localises to the cytoplasm. In terms of biological role, directs the termination of nascent peptide synthesis (translation) in response to the termination codons UAA, UAG and UGA. The protein is Peptide chain release factor subunit 1 of Methanococcus maripaludis (strain C5 / ATCC BAA-1333).